We begin with the raw amino-acid sequence, 216 residues long: ATP phosphoribosyltransferase (216 aa).

It belongs to the ATP phosphoribosyltransferase family. Short subfamily. As to quaternary structure, heteromultimer composed of HisG and HisZ subunits.

The protein localises to the cytoplasm. The catalysed reaction is 1-(5-phospho-beta-D-ribosyl)-ATP + diphosphate = 5-phospho-alpha-D-ribose 1-diphosphate + ATP. It functions in the pathway amino-acid biosynthesis; L-histidine biosynthesis; L-histidine from 5-phospho-alpha-D-ribose 1-diphosphate: step 1/9. Functionally, catalyzes the condensation of ATP and 5-phosphoribose 1-diphosphate to form N'-(5'-phosphoribosyl)-ATP (PR-ATP). Has a crucial role in the pathway because the rate of histidine biosynthesis seems to be controlled primarily by regulation of HisG enzymatic activity. The chain is ATP phosphoribosyltransferase from Synechococcus sp. (strain CC9902).